The primary structure comprises 530 residues: TNF receptor-associated factor family protein DDB_G0272829 (530 aa).

Residues 35–81 form an RING-type; degenerate zinc finger; sequence CQICEGLLISSLIPNRMKALQCINGHCFCLTCWESILEIKSECPTCR. 2 TRAF-type zinc fingers span residues 134–188 and 189–246; these read RHES…KQMQ and GHIL…NDND. Disordered regions lie at residues 242–267, 391–432, and 483–530; these read NNDNDNNDSDENNSNQSLSSSSLSSS, TTTT…DNQG, and FNQL…GTSL. Low complexity-rich tracts occupy residues 253–267, 391–415, and 485–502; these read NNSNQSLSSSSLSSS, TTTTTSTSDKNNNNNNNNNNNNNNN, and QLSQPQTQPQSQSQSQSL. A coiled-coil region spans residues 361-422; it reads ILEHQQQQNQ…NNNNEDEEDD (62 aa). Over residues 509–530 the composition is skewed to polar residues; sequence ITINQNQNTPSNPFSIFSGTSL.

It belongs to the TNF receptor-associated factor family.

It localises to the cytoplasm. Its function is as follows. Probable adapter protein and signal transducer that links members of the tumor necrosis factor receptor family to different signaling pathways by association with the receptor cytoplasmic domain and kinases. The protein is TNF receptor-associated factor family protein DDB_G0272829 of Dictyostelium discoideum (Social amoeba).